The sequence spans 103 residues: Histone H4 (103 aa).

N6-acetyl-N6-methyllysine; alternate is present on Lys6. 3 positions are modified to N6-methyllysine; alternate: Lys6, Lys9, and Lys13. The residue at position 13 (Lys13) is an N6-acetyl-N6-methyllysine; alternate. The DNA-binding element occupies 17 to 21 (KRHRK). The residue at position 92 (Lys92) is an N6-glutaryllysine.

This sequence belongs to the histone H4 family. The nucleosome is a histone octamer containing two molecules each of H2A, H2B, H3 and H4 assembled in one H3-H4 heterotetramer and two H2A-H2B heterodimers. The octamer wraps approximately 147 bp of DNA. In terms of processing, glutarylation at Lys-92 (H4K91glu) destabilizes nucleosomes by promoting dissociation of the H2A-H2B dimers from nucleosomes.

The protein resides in the nucleus. It localises to the chromosome. Core component of nucleosome. Nucleosomes wrap and compact DNA into chromatin, limiting DNA accessibility to the cellular machineries which require DNA as a template. Histones thereby play a central role in transcription regulation, DNA repair, DNA replication and chromosomal stability. DNA accessibility is regulated via a complex set of post-translational modifications of histones, also called histone code, and nucleosome remodeling. The polypeptide is Histone H4 (H4.1) (Mortierella alpina (Oleaginous fungus)).